Consider the following 214-residue polypeptide: Cytochrome c biogenesis ATP-binding export protein CcmA (214 aa).

The region spanning 16 to 212 is the ABC transporter domain; sequence LRVSGLSLSR…PDAKRIDLGA (197 aa). 48-55 serves as a coordination point for ATP; it reads GPNGTGKT.

This sequence belongs to the ABC transporter superfamily. CcmA exporter (TC 3.A.1.107) family. In terms of assembly, the complex is composed of two ATP-binding proteins (CcmA) and two transmembrane proteins (CcmB).

It is found in the cell inner membrane. The enzyme catalyses heme b(in) + ATP + H2O = heme b(out) + ADP + phosphate + H(+). Its function is as follows. Part of the ABC transporter complex CcmAB involved in the biogenesis of c-type cytochromes; once thought to export heme, this seems not to be the case, but its exact role is uncertain. Responsible for energy coupling to the transport system. This chain is Cytochrome c biogenesis ATP-binding export protein CcmA, found in Maricaulis maris (strain MCS10) (Caulobacter maris).